The sequence spans 195 residues: Inner membrane-spanning protein YciB (195 aa).

A run of 5 helical transmembrane segments spans residues 34–54, 65–85, 88–108, 131–151, and 160–180; these read IYGA…ALWL, FTLG…EDTF, WKAP…HFIG, LNIA…YVVF, and FKVF…GIFL.

It belongs to the YciB family.

It is found in the cell inner membrane. In terms of biological role, plays a role in cell envelope biogenesis, maintenance of cell envelope integrity and membrane homeostasis. This chain is Inner membrane-spanning protein YciB, found in Pseudomonas paraeruginosa (strain DSM 24068 / PA7) (Pseudomonas aeruginosa (strain PA7)).